A 616-amino-acid chain; its full sequence is Probable Xaa-Pro aminopeptidase P (616 aa).

Mn(2+)-binding residues include D413, D424, E522, and E536.

It belongs to the peptidase M24B family. Mn(2+) serves as cofactor.

It catalyses the reaction Release of any N-terminal amino acid, including proline, that is linked to proline, even from a dipeptide or tripeptide.. Catalyzes the removal of a penultimate prolyl residue from the N-termini of peptides. This is Probable Xaa-Pro aminopeptidase P (AMPP) from Paracoccidioides lutzii (strain ATCC MYA-826 / Pb01) (Paracoccidioides brasiliensis).